The sequence spans 451 residues: REST corepressor 3 (451 aa).

Residues 1-55 (MPGMMEKGPELLGKSRSANGGAKSPAGGGGSSANGGLHFSEPESGCSSDDEHGDV) are disordered. Residues 55-139 (VGMRVGAEYQ…KSLADLPNFT (85 aa)) form the ELM2 domain. A Glycyl lysine isopeptide (Lys-Gly) (interchain with G-Cter in SUMO2) cross-link involves residue Lys-76. Residues 140-191 (PFPDEWTVEDKVLFEQAFSFHGKSFHRIQQMLPDKTIASLVKYYYSWKKTRS) enclose the SANT domain. The disordered stretch occupies residues 204–275 (ANRHNQGDSD…SQRSKCRPPK (72 aa)). Phosphoserine is present on residues Ser-212 and Ser-227. Residues 218–240 (EAHPMDGNDSDYDPKKEAKREGN) are compositionally biased toward basic and acidic residues. Lys-249 is covalently cross-linked (Glycyl lysine isopeptide (Lys-Gly) (interchain with G-Cter in SUMO2)). Basic residues predominate over residues 261–273 (QHRHHSQRSKCRP). Positions 293-329 (AANTILRQLDMELISLKRQVQNAKQVNSALKQKMEGG) form a coiled coil. The interval 333–451 (FKPPEAQTPQ…IQTDSQPSLH (119 aa)) is disordered. Positions 349–361 (PSPPAPSSTPTPT) are enriched in pro residues. A compositionally biased stretch (low complexity) spans 375–384 (RPTLPAAPAL). Asymmetric dimethylarginine occurs at positions 401 and 413. The span at 431–451 (VGGQQPPSLIGIQTDSQPSLH) shows a compositional bias: polar residues.

It belongs to the CoREST family.

Its subcellular location is the nucleus. Its function is as follows. May act as a component of a corepressor complex that represses transcription. The polypeptide is REST corepressor 3 (Rcor3) (Mus musculus (Mouse)).